Consider the following 333-residue polypeptide: 4-hydroxy-3-methylbut-2-enyl diphosphate reductase (333 aa).

Cys-34 serves as a coordination point for [4Fe-4S] cluster. Residues His-63 and His-96 each contribute to the (2E)-4-hydroxy-3-methylbut-2-enyl diphosphate site. Dimethylallyl diphosphate contacts are provided by His-63 and His-96. Isopentenyl diphosphate is bound by residues His-63 and His-96. Cys-118 contacts [4Fe-4S] cluster. His-146 serves as a coordination point for (2E)-4-hydroxy-3-methylbut-2-enyl diphosphate. A dimethylallyl diphosphate-binding site is contributed by His-146. An isopentenyl diphosphate-binding site is contributed by His-146. Glu-148 serves as the catalytic Proton donor. (2E)-4-hydroxy-3-methylbut-2-enyl diphosphate is bound at residue Thr-186. Residue Cys-216 participates in [4Fe-4S] cluster binding. Residues Ser-244, Ser-245, Asn-246, and Ser-289 each contribute to the (2E)-4-hydroxy-3-methylbut-2-enyl diphosphate site. Dimethylallyl diphosphate-binding residues include Ser-244, Ser-245, Asn-246, and Ser-289. Residues Ser-244, Ser-245, Asn-246, and Ser-289 each coordinate isopentenyl diphosphate.

It belongs to the IspH family. The cofactor is [4Fe-4S] cluster.

It catalyses the reaction isopentenyl diphosphate + 2 oxidized [2Fe-2S]-[ferredoxin] + H2O = (2E)-4-hydroxy-3-methylbut-2-enyl diphosphate + 2 reduced [2Fe-2S]-[ferredoxin] + 2 H(+). It carries out the reaction dimethylallyl diphosphate + 2 oxidized [2Fe-2S]-[ferredoxin] + H2O = (2E)-4-hydroxy-3-methylbut-2-enyl diphosphate + 2 reduced [2Fe-2S]-[ferredoxin] + 2 H(+). It participates in isoprenoid biosynthesis; dimethylallyl diphosphate biosynthesis; dimethylallyl diphosphate from (2E)-4-hydroxy-3-methylbutenyl diphosphate: step 1/1. The protein operates within isoprenoid biosynthesis; isopentenyl diphosphate biosynthesis via DXP pathway; isopentenyl diphosphate from 1-deoxy-D-xylulose 5-phosphate: step 6/6. Functionally, catalyzes the conversion of 1-hydroxy-2-methyl-2-(E)-butenyl 4-diphosphate (HMBPP) into a mixture of isopentenyl diphosphate (IPP) and dimethylallyl diphosphate (DMAPP). Acts in the terminal step of the DOXP/MEP pathway for isoprenoid precursor biosynthesis. The polypeptide is 4-hydroxy-3-methylbut-2-enyl diphosphate reductase (Mycolicibacterium gilvum (strain PYR-GCK) (Mycobacterium gilvum (strain PYR-GCK))).